We begin with the raw amino-acid sequence, 577 residues long: Vacuolar membrane amino acid uptake transporter fnx2 (577 aa).

Positions 1–14 are enriched in polar residues; the sequence is MSNPRTKSPNTNRG. The disordered stretch occupies residues 1–80; it reads MSNPRTKSPN…SPHRQDAATT (80 aa). Residues 22-39 are compositionally biased toward low complexity; it reads SALLNDSLSSLNGNSSYD. Residues 40-62 show a composition bias toward basic and acidic residues; sequence SIKDSSKNNKDVAEVNEYPRRPE. A run of 14 helical transmembrane segments spans residues 91–111, 123–145, 157–177, 186–206, 217–237, 244–264, 286–306, 317–337, 356–376, 391–411, 418–438, 448–468, 490–510, and 547–567; these read VLPALLLGVVLAALDNTIVAS, FSQVSWTATAYMISCTAFQPLFG, LLAAYCVFGIGCFLCGTSRSL, IAGIGGGGMNSTVSILMSDIV, IINVFFAIGSSLGGPVGGYFA, IGFLIQVPLIAIAFLCVYFTL, LILLIIGVTTMTCAFTLGGNV, LLIASSISYLSFVYVEAFVAF, LCNFFHSVANFGWIYGMPLFF, LIPMIIGSSLGSLLGGAVISL, ITVGSYFFGSVAALFMLRYGY, YPFSGGLGNGIAVTTTLVAII, GCVLGVSISSSIVQTVLGIKL, and LLGSIHYSFLFVSFMFFCAFV.

It belongs to the major facilitator superfamily.

It localises to the vacuole. The protein resides in the membrane. In terms of biological role, MFS-type transporter involved in vacuolar amino acid uptake. The sequence is that of Vacuolar membrane amino acid uptake transporter fnx2 (fnx2) from Schizosaccharomyces pombe (strain 972 / ATCC 24843) (Fission yeast).